The primary structure comprises 299 residues: Acetylglutamate kinase (299 aa).

Residues 64–65 (GG), Arg86, and Asn197 each bind substrate.

The protein belongs to the acetylglutamate kinase family. ArgB subfamily.

It localises to the cytoplasm. It carries out the reaction N-acetyl-L-glutamate + ATP = N-acetyl-L-glutamyl 5-phosphate + ADP. The protein operates within amino-acid biosynthesis; L-arginine biosynthesis; N(2)-acetyl-L-ornithine from L-glutamate: step 2/4. In terms of biological role, catalyzes the ATP-dependent phosphorylation of N-acetyl-L-glutamate. The sequence is that of Acetylglutamate kinase from Persephonella marina (strain DSM 14350 / EX-H1).